The sequence spans 357 residues: Peptide chain release factor 1 (357 aa).

Gln-234 carries the N5-methylglutamine modification.

The protein belongs to the prokaryotic/mitochondrial release factor family. Methylated by PrmC. Methylation increases the termination efficiency of RF1.

The protein resides in the cytoplasm. In terms of biological role, peptide chain release factor 1 directs the termination of translation in response to the peptide chain termination codons UAG and UAA. The protein is Peptide chain release factor 1 (prfA) of Lactococcus lactis subsp. lactis (strain IL1403) (Streptococcus lactis).